Reading from the N-terminus, the 364-residue chain is Aminomethyltransferase (364 aa).

This sequence belongs to the GcvT family. As to quaternary structure, the glycine cleavage system is composed of four proteins: P, T, L and H.

The enzyme catalyses N(6)-[(R)-S(8)-aminomethyldihydrolipoyl]-L-lysyl-[protein] + (6S)-5,6,7,8-tetrahydrofolate = N(6)-[(R)-dihydrolipoyl]-L-lysyl-[protein] + (6R)-5,10-methylene-5,6,7,8-tetrahydrofolate + NH4(+). The glycine cleavage system catalyzes the degradation of glycine. In Desulforamulus reducens (strain ATCC BAA-1160 / DSM 100696 / MI-1) (Desulfotomaculum reducens), this protein is Aminomethyltransferase.